Here is a 229-residue protein sequence, read N- to C-terminus: Uracil-DNA glycosylase (229 aa).

Catalysis depends on D67, which acts as the Proton acceptor.

Belongs to the uracil-DNA glycosylase (UDG) superfamily. UNG family.

The protein resides in the cytoplasm. It carries out the reaction Hydrolyzes single-stranded DNA or mismatched double-stranded DNA and polynucleotides, releasing free uracil.. Functionally, excises uracil residues from the DNA which can arise as a result of misincorporation of dUMP residues by DNA polymerase or due to deamination of cytosine. The protein is Uracil-DNA glycosylase of Coxiella burnetii (strain CbuK_Q154) (Coxiella burnetii (strain Q154)).